A 199-amino-acid chain; its full sequence is Large ribosomal subunit protein bL25 (199 aa).

This sequence belongs to the bacterial ribosomal protein bL25 family. CTC subfamily. As to quaternary structure, part of the 50S ribosomal subunit; part of the 5S rRNA/L5/L18/L25 subcomplex. Contacts the 5S rRNA. Binds to the 5S rRNA independently of L5 and L18.

Its function is as follows. This is one of the proteins that binds to the 5S RNA in the ribosome where it forms part of the central protuberance. This Nostoc punctiforme (strain ATCC 29133 / PCC 73102) protein is Large ribosomal subunit protein bL25.